The following is a 197-amino-acid chain: Large ribosomal subunit protein uL11 (197 aa).

It belongs to the universal ribosomal protein uL11 family. In terms of assembly, part of the ribosomal stalk of the 50S ribosomal subunit. Interacts with L10 and the large rRNA to form the base of the stalk. L10 forms an elongated spine to which L12 dimers bind in a sequential fashion forming a multimeric L10(L12)X complex. In terms of processing, one or more lysine residues are methylated.

Its function is as follows. Forms part of the ribosomal stalk which helps the ribosome interact with GTP-bound translation factors. This chain is Large ribosomal subunit protein uL11, found in Mycoplasmopsis pulmonis (strain UAB CTIP) (Mycoplasma pulmonis).